A 456-amino-acid polypeptide reads, in one-letter code: Short chain dehydrogenase tazN (456 aa).

The NADP(+) site is built by V45, D99, N126, R160, Y195, K199, and T229. Y195 serves as the catalytic Proton donor. K199 functions as the Lowers pKa of active site Tyr in the catalytic mechanism.

The protein belongs to the short-chain dehydrogenases/reductases (SDR) family.

It functions in the pathway secondary metabolite biosynthesis. Its function is as follows. Short chain dehydrogenase; part of the gene cluster that mediates the biosynthesis of azaterrilone A and other azaphilones, a class of fungal metabolites characterized by a highly oxygenated pyrano-quinone bicyclic core and exhibiting a broad range of bioactivities. The first step of the pathway begins with the non-reducing polyketide synthase tazA that assembles one acetyl-CoA starter unit, five malonyl-CoA units, and catalyzes a series of Claisen condensations, methylation, PT-mediated cyclization, and finally releases the first hexaketide precursor through the R-domain. The tazA product then undergoes reduction on its terminal ketone and the following pyran-ring formation by yet undetermined enzyme(s). Dehydration and enoyl reduction, possibly involving the trans-enoyl reductase tazE leads to the next intermediate. TazD is predicted as an acetyltransferase and might catalyze the acetylation steps leading to the synthesis of azaterrilone A. Azaterrilone A is not the final product of the taz pathway and both the highly reducing polyketide synthase tazB and the dual enzyme tazHJ catalyze late steps of the pathway, leading to the production of the 2 final stereoisomers that contain additional polyketide modification whose structures have still to be determined. The chain is Short chain dehydrogenase tazN from Aspergillus terreus (strain NIH 2624 / FGSC A1156).